We begin with the raw amino-acid sequence, 2094 residues long: Non-reducing polyketide synthase ustP (2094 aa).

The N-terminal acylcarrier protein transacylase (SAT) domain stretch occupies residues Val9–His243. The segment at Asn357–Pro377 is disordered. One can recognise a Ketosynthase family 3 (KS3) domain in the interval Arg379–Asp813. Residues Cys551, His686, and His727 each act as for beta-ketoacyl synthase activity in the active site. Positions Phe914 to Ala1227 are malonyl-CoA:ACP transacylase (MAT) domain. Ser1004 functions as the For acyl/malonyl transferase activity in the catalytic mechanism. A product template (PT) domain region spans residues Thr1305 to Pro1629. Positions Val1308–Arg1445 are N-terminal hotdog fold. Residues Val1308–Asp1625 form the PKS/mFAS DH domain. Residue His1341 is the Proton acceptor; for dehydratase activity of the active site. The C-terminal hotdog fold stretch occupies residues Gly1473–Asp1625. The active-site Proton donor; for dehydratase activity is Asp1536. Positions Ala1644 to Gln1671 are enriched in low complexity. The disordered stretch occupies residues Ala1644 to Asp1689. The Carrier domain maps to Asp1689–Ser1763. O-(pantetheine 4'-phosphoryl)serine is present on Ser1723. Over residues Ser1762–Pro1778 the composition is skewed to polar residues. The segment at Ser1762–Pro1782 is disordered. A claisen cyclase domain region spans residues Lys1844–Ser2069. Ser1916 (for Claisen cyclase activity) is an active-site residue.

It catalyses the reaction 6 malonyl-CoA + acetyl-CoA + 6 H(+) = naphtopyrone YWA1 + 6 CO2 + 7 CoA + H2O. It participates in secondary metabolite biosynthesis. Non-reducing polyketide synthase; part of the gene cluster that mediates the biosynthesis of ustilaginoidins, dimeric gamma-naphthopyrones isolated from different fungal species. The first step in the biosynthesis of ustilaginoidins is the production of gamma-naphthopyrone precursor YWA1 by the non-reducing polyketide synthase ustP, via condensation of one acetyl-CoA starter unit with 6 malonyl-CoA units. YWA1 is then probably substrate of the ustZ to yield norrubrofusarin via a dehydration reaction. A key enzyme in the biosynthetic pathway is the laccase ustL, which catalyzes the oxidative dimerization of norrubrofusarin to ustilaginoidin A. It can produce the M- and P-atropisomers in varying amounts, depending on the reaction conditions. For the biosynthesis of 3-methylustilaginoid in derivatives such as chaetochromin A, a methylated derivative of YWA1 is required. The C-methylation is considered to be catalyzed by ustM, the phosphopantetheine attachment site of which indicates that it acts on the growing polyketide chain before release of the product. For the biosynthesis of chaetochromin A, it is assumed that saturation of the D2 double bond takes place before dimerization, and is probably catalyzed by an external reductase because no candidate gene was identified within the cluster. The protein is Non-reducing polyketide synthase ustP of Ustilaginoidea virens (Rice false smut fungus).